The primary structure comprises 556 residues: Polypeptide N-acetylgalactosaminyltransferase 13 (556 aa).

At 1-4 (MRRF) the chain is on the cytoplasmic side. The chain crosses the membrane as a helical; Signal-anchor for type II membrane protein span at residues 5–27 (VYCKVVLATSLMWVLVDVFLLLY). Residues 28 to 556 (FSECNKCDDK…WLLRNMTLGT (529 aa)) lie on the Lumenal side of the membrane. N94 and N116 each carry an N-linked (GlcNAc...) asparagine glycan. Disulfide bonds link C105/C338, C329/C407, C441/C458, C481/C496, and C522/C539. The tract at residues 114–224 (LPNTSVVIVF…LGWLEPLLAR (111 aa)) is catalytic subdomain A. 2 residues coordinate substrate: D155 and R185. Residues D208 and H210 each coordinate Mn(2+). Residues 284-346 (PVRTPTMAGG…TCSHVGHVFR (63 aa)) are catalytic subdomain B. W315 contacts substrate. H343 is a Mn(2+) binding site. 2 residues coordinate substrate: R346 and Y351. A Ricin B-type lectin domain is found at 428–550 (YSLGEIRNVE…GSRSQQWLLR (123 aa)). N-linked (GlcNAc...) asparagine glycosylation occurs at N551.

It belongs to the glycosyltransferase 2 family. GalNAc-T subfamily. It depends on Mn(2+) as a cofactor. In terms of tissue distribution, specifically expressed in neuronal cells. Expressed in fetal brain, whole adult brain, cerebral cortex and cerebellum. Not expressed in other tissues tested.

Its subcellular location is the golgi apparatus membrane. The enzyme catalyses L-seryl-[protein] + UDP-N-acetyl-alpha-D-galactosamine = a 3-O-[N-acetyl-alpha-D-galactosaminyl]-L-seryl-[protein] + UDP + H(+). It catalyses the reaction L-threonyl-[protein] + UDP-N-acetyl-alpha-D-galactosamine = a 3-O-[N-acetyl-alpha-D-galactosaminyl]-L-threonyl-[protein] + UDP + H(+). It participates in protein modification; protein glycosylation. Functionally, catalyzes the initial reaction in O-linked oligosaccharide biosynthesis, the transfer of an N-acetyl-D-galactosamine (GalNAc) residue from UDP-GalNAc to a serine or threonine residue on the protein receptor. Generates GalNAc-O-Ser/Thr structure also known as Tn antigen, which itself is immunogenic but also serves as a precursor for the synthesis of different mucin-type O-glycan core structures. Contributes to the synthesis of O-linked glycans on mucins and proteoglycans of the central nervous system. May promote neurogenesis through glycosylation and stabilization of PDPN. Its function is as follows. Can glycosylate both unmodified peptides and glycopeptides that already contain an O-linked GalNAc sugar. Transfers GalNAc to Thr-/Ser-rich tandem repeats GTTPSPVPTTSTTSAP of MUC5AC, specifically on Thr-3 of non-glycosylated MUC5AC peptide, on Thr-12 and Thr-13 of preglycosylated MUC5AC at Thr-3 (MUC5AC-3), on Thr-3 of preglycosylated MUC5AC at Thr-13 (MUC5AC-13) and on Thr-12 of preglycosylated MUC5AC at Thr-3 and Thr-13 (MUC5AC-3,13). Transfers GalNAc to three consecutive serine/threonine residues on SDC3 forming a triplet-Tn epitope expressed in Purkinje cells of the developing brain. In terms of biological role, can glycosylate both unmodified peptides and glycopeptides that already contain an O-linked GalNAc sugar. Transfers GalNAc to Thr-/Ser-rich tandem repeats GTTPSPVPTTSTTSAP of MUC5AC, specifically on Thr-3 of non-glycosylated MUC5AC peptide, on Thr-12 and Thr-13 of preglycosylated MUC5AC at Thr-3 (MUC5AC-3), on Thr-3 of preglycosylated MUC5AC at Thr-13 (MUC5AC-13) and on Thr-12 of preglycosylated MUC5AC at Thr-3 and Thr-13 (MUC5AC-3,13). This is Polypeptide N-acetylgalactosaminyltransferase 13 (GALNT13) from Homo sapiens (Human).